We begin with the raw amino-acid sequence, 109 residues long: Nucleoid-associated protein SO_2014 (109 aa).

The protein belongs to the YbaB/EbfC family. Homodimer.

It is found in the cytoplasm. It localises to the nucleoid. In terms of biological role, binds to DNA and alters its conformation. May be involved in regulation of gene expression, nucleoid organization and DNA protection. This chain is Nucleoid-associated protein SO_2014, found in Shewanella oneidensis (strain ATCC 700550 / JCM 31522 / CIP 106686 / LMG 19005 / NCIMB 14063 / MR-1).